Here is a 338-residue protein sequence, read N- to C-terminus: Glyceraldehyde-3-phosphate dehydrogenase GAPC2, cytosolic (338 aa).

Residues 15 to 16 (RI), Asp-37, and Arg-84 each bind NAD(+). Residue 155–157 (SCT) coordinates D-glyceraldehyde 3-phosphate. Residue Cys-156 is the Nucleophile of the active site. The residue at position 156 (Cys-156) is an S-glutathionyl cysteine; transient; alternate. At Cys-156 the chain carries S-nitrosocysteine; transient; alternate. Cys-160 carries the S-nitrosocysteine; transient modification. Residues Thr-186, 215-216 (TG), and Arg-238 contribute to the D-glyceraldehyde 3-phosphate site. Asn-320 is an NAD(+) binding site.

It belongs to the glyceraldehyde-3-phosphate dehydrogenase family. In terms of assembly, homotetramer. Interacts with PLDDELTA. Binds to DPB3-1/NF-YC10 in response to heat-stress; this interaction promotes DPB3-1/NF-YC10 DNA-binding ability to its target promoter. S-glutathionylation at Cys-156 in the presence of oxidized glutathione (GSSG). S-nitrosylation at Cys-156 and Cys-160 in the presence of S-nitrosoglutathione (GSNO) or sodium nitroprusside (SNP). These reactions may be both a protective mechanism against irreversible oxidation and a mean to store inhibited enzyme in a recoverable form.

It is found in the cytoplasm. The protein localises to the nucleus. The catalysed reaction is D-glyceraldehyde 3-phosphate + phosphate + NAD(+) = (2R)-3-phospho-glyceroyl phosphate + NADH + H(+). It functions in the pathway carbohydrate degradation; glycolysis; pyruvate from D-glyceraldehyde 3-phosphate: step 1/5. With respect to regulation, inhibition by oxidized glutathione (GSSG), S-nitrosoglutathione (GSNO) and hydrogen peroxide. Its function is as follows. Key enzyme in glycolysis that catalyzes the first step of the pathway by converting D-glyceraldehyde 3-phosphate (G3P) into 3-phospho-D-glyceroyl phosphate. Essential for the maintenance of cellular ATP levels and carbohydrate metabolism. Binds DNA in vitro. Together with DNA polymerase II subunit B3-1 (DPB3-1) and GAPC1, enhances heat tolerance and promotes the expression of heat-inducible genes. The polypeptide is Glyceraldehyde-3-phosphate dehydrogenase GAPC2, cytosolic (Arabidopsis thaliana (Mouse-ear cress)).